The following is a 108-amino-acid chain: uncharacterized protein (108 aa).

This is an uncharacterized protein from Schizosaccharomyces pombe (strain 972 / ATCC 24843) (Fission yeast).